Consider the following 430-residue polypeptide: Long-chain specific acyl-CoA dehydrogenase, mitochondrial (430 aa).

The N-terminal 30 residues, 1–30 (MAARLLLRSLRVLKARSAPRPPPSARCSHS), are a transit peptide targeting the mitochondrion. The disordered stretch occupies residues 17–39 (SAPRPPPSARCSHSGAEARLETP). Lys-42 carries the N6-acetyllysine modification. Phosphoserine occurs at positions 54 and 55. N6-acetyllysine; alternate occurs at positions 66 and 81. N6-succinyllysine; alternate is present on residues Lys-66 and Lys-81. N6-acetyllysine is present on residues Lys-92 and Lys-95. Lys-165 carries the post-translational modification N6-succinyllysine. An FAD-binding site is contributed by 170–179 (IAMTEPGAGS). Position 179 (Ser-179) interacts with substrate. Position 191 is a phosphoserine (Ser-191). 203-205 (FIT) provides a ligand contact to FAD. 227–228 (AH) lines the substrate pocket. Lys-240 is modified (N6-succinyllysine). An N6-acetyllysine; alternate mark is found at Lys-254 and Lys-279. Residues Lys-254 and Lys-279 each carry the N6-succinyllysine; alternate modification. Residues Tyr-282 and 289–292 (PQER) contribute to the substrate site. The active-site Proton acceptor is the Glu-291. Arg-317 contributes to the FAD binding site. Residue Lys-318 is modified to N6-acetyllysine. Position 322 is an N6-acetyllysine; alternate (Lys-322). Lys-322 bears the N6-succinyllysine; alternate mark. Residue Gln-328 participates in FAD binding. An N6-acetyllysine modification is found at Lys-358. Residue Ser-362 is modified to Phosphoserine. Residue 385–389 (QLHGG) participates in FAD binding. A substrate-binding site is contributed by 412–413 (GG). Position 414 to 416 (414 to 416 (TNE)) interacts with FAD.

This sequence belongs to the acyl-CoA dehydrogenase family. In terms of assembly, homotetramer. Requires FAD as cofactor. Post-translationally, acetylation at Lys-318 and Lys-322 in proximity of the cofactor-binding sites strongly reduces catalytic activity. These sites are deacetylated by SIRT3. In terms of tissue distribution, expressed in heart, skeletal muscle, kidney, and brain. Expressed in liver (at protein level).

It is found in the mitochondrion matrix. It carries out the reaction a long-chain 2,3-saturated fatty acyl-CoA + oxidized [electron-transfer flavoprotein] + H(+) = a long-chain (2E)-enoyl-CoA + reduced [electron-transfer flavoprotein]. It catalyses the reaction oxidized [electron-transfer flavoprotein] + hexadecanoyl-CoA + H(+) = (2E)-hexadecenoyl-CoA + reduced [electron-transfer flavoprotein]. The enzyme catalyses hexanoyl-CoA + oxidized [electron-transfer flavoprotein] + H(+) = (2E)-hexenoyl-CoA + reduced [electron-transfer flavoprotein]. The catalysed reaction is octanoyl-CoA + oxidized [electron-transfer flavoprotein] + H(+) = (2E)-octenoyl-CoA + reduced [electron-transfer flavoprotein]. It carries out the reaction decanoyl-CoA + oxidized [electron-transfer flavoprotein] + H(+) = (2E)-decenoyl-CoA + reduced [electron-transfer flavoprotein]. It catalyses the reaction dodecanoyl-CoA + oxidized [electron-transfer flavoprotein] + H(+) = (2E)-dodecenoyl-CoA + reduced [electron-transfer flavoprotein]. The enzyme catalyses tetradecanoyl-CoA + oxidized [electron-transfer flavoprotein] + H(+) = (2E)-tetradecenoyl-CoA + reduced [electron-transfer flavoprotein]. The catalysed reaction is octadecanoyl-CoA + oxidized [electron-transfer flavoprotein] + H(+) = (2E)-octadecenoyl-CoA + reduced [electron-transfer flavoprotein]. It carries out the reaction eicosanoyl-CoA + oxidized [electron-transfer flavoprotein] + H(+) = (2E)-eicosenoyl-CoA + reduced [electron-transfer flavoprotein]. It catalyses the reaction docosanoyl-CoA + oxidized [electron-transfer flavoprotein] + H(+) = (2E)-docosenoyl-CoA + reduced [electron-transfer flavoprotein]. The enzyme catalyses tetracosanoyl-CoA + oxidized [electron-transfer flavoprotein] + H(+) = (2E)-tetracosenoyl-CoA + reduced [electron-transfer flavoprotein]. The catalysed reaction is (5E)-tetradecenoyl-CoA + oxidized [electron-transfer flavoprotein] + H(+) = (2E,5E)-tetradecadienoyl-CoA + reduced [electron-transfer flavoprotein]. It carries out the reaction (5Z)-tetradecenoyl-CoA + oxidized [electron-transfer flavoprotein] + H(+) = (2E,5Z)-tetradecadienoyl-CoA + reduced [electron-transfer flavoprotein]. It catalyses the reaction oxidized [electron-transfer flavoprotein] + (9Z)-octadecenoyl-CoA + H(+) = (2E,9Z)-octadecadienoyl-CoA + reduced [electron-transfer flavoprotein]. It participates in lipid metabolism; mitochondrial fatty acid beta-oxidation. Functionally, long-chain specific acyl-CoA dehydrogenase is one of the acyl-CoA dehydrogenases that catalyze the first step of mitochondrial fatty acid beta-oxidation, an aerobic process breaking down fatty acids into acetyl-CoA and allowing the production of energy from fats. The first step of fatty acid beta-oxidation consists in the removal of one hydrogen from C-2 and C-3 of the straight-chain fatty acyl-CoA thioester, resulting in the formation of trans-2-enoyl-CoA. Among the different mitochondrial acyl-CoA dehydrogenases, long-chain specific acyl-CoA dehydrogenase can act on saturated and unsaturated acyl-CoAs with 6 to 24 carbons with a preference for 8 to 18 carbons long primary chains. The chain is Long-chain specific acyl-CoA dehydrogenase, mitochondrial from Mus musculus (Mouse).